The primary structure comprises 65 residues: Large ribosomal subunit protein bL35 (65 aa).

A disordered region spans residues 1–26 (MPKMKTNKSAQKRFKKTGSGRFKCKQ). Residues 10-26 (AQKRFKKTGSGRFKCKQ) show a composition bias toward basic residues.

The protein belongs to the bacterial ribosomal protein bL35 family.

The polypeptide is Large ribosomal subunit protein bL35 (Hydrogenovibrio crunogenus (strain DSM 25203 / XCL-2) (Thiomicrospira crunogena)).